The following is a 215-amino-acid chain: Small ribosomal subunit protein uS7 (215 aa).

The protein belongs to the universal ribosomal protein uS7 family. As to quaternary structure, part of the 30S ribosomal subunit.

One of the primary rRNA binding proteins, it binds directly to 16S rRNA where it nucleates assembly of the head domain of the 30S subunit. Is located at the subunit interface close to the decoding center. This is Small ribosomal subunit protein uS7 from Thermococcus kodakarensis (strain ATCC BAA-918 / JCM 12380 / KOD1) (Pyrococcus kodakaraensis (strain KOD1)).